A 96-amino-acid polypeptide reads, in one-letter code: ESAT-6-like protein EsxH (96 aa).

Histidine 14, histidine 70, histidine 76, and glutamate 77 together coordinate Zn(2+).

Belongs to the WXG100 family. ESAT-6 subfamily. As to quaternary structure, forms a tight 1:1 complex with EsxG. When it is complexed to EsxG, interacts directly with host HGS/HRS.

The protein resides in the secreted. EsxH, in complex with EsxG, disrupts ESCRT function and impairs host phagosome maturation, thereby promoting intracellular bacterial growth. The complex acts by interacting, via EsxH, with the host hepatocyte growth factor-regulated tyrosine kinase substrate (HGS/HRS), a component of the ESCRT machinery. This is ESAT-6-like protein EsxH from Mycobacterium tuberculosis (strain ATCC 25618 / H37Rv).